The primary structure comprises 260 residues: 3'-5' ssDNA/RNA exonuclease TatD (260 aa).

The a divalent metal cation site is built by Glu91, His127, and His152.

It belongs to the metallo-dependent hydrolases superfamily. TatD-type hydrolase family. TatD subfamily. As to quaternary structure, monomer. The cofactor is Mg(2+).

It localises to the cytoplasm. In terms of biological role, 3'-5' exonuclease that prefers single-stranded DNA and RNA. May play a role in the H(2)O(2)-induced DNA damage repair. The sequence is that of 3'-5' ssDNA/RNA exonuclease TatD from Escherichia fergusonii (strain ATCC 35469 / DSM 13698 / CCUG 18766 / IAM 14443 / JCM 21226 / LMG 7866 / NBRC 102419 / NCTC 12128 / CDC 0568-73).